The sequence spans 291 residues: BTB/POZ domain-containing protein 19 (291 aa).

One can recognise a BTB domain in the interval 29-98; the sequence is SDVCFVVGQE…LYTNSVKLYR (70 aa). The BACK domain occupies 134-234; sequence CEALQVAVTF…LALLAPAELS (101 aa).

This is BTB/POZ domain-containing protein 19 (BTBD19) from Homo sapiens (Human).